Here is a 714-residue protein sequence, read N- to C-terminus: Fatty acid oxidation complex subunit alpha (714 aa).

The enoyl-CoA hydratase stretch occupies residues 1–190 (MEMASAFTLN…KLGLVDDVVP (190 aa)). The interval 306-714 (APLNSVGILG…FWKTTATDLQ (409 aa)) is 3-hydroxyacyl-CoA dehydrogenase.

In the N-terminal section; belongs to the enoyl-CoA hydratase/isomerase family. This sequence in the central section; belongs to the 3-hydroxyacyl-CoA dehydrogenase family. In terms of assembly, heterotetramer of two alpha chains (FadJ) and two beta chains (FadI).

It localises to the cytoplasm. It catalyses the reaction a (3S)-3-hydroxyacyl-CoA = a (2E)-enoyl-CoA + H2O. The enzyme catalyses a 4-saturated-(3S)-3-hydroxyacyl-CoA = a (3E)-enoyl-CoA + H2O. The catalysed reaction is a (3S)-3-hydroxyacyl-CoA + NAD(+) = a 3-oxoacyl-CoA + NADH + H(+). It carries out the reaction (3S)-3-hydroxybutanoyl-CoA = (3R)-3-hydroxybutanoyl-CoA. It functions in the pathway lipid metabolism; fatty acid beta-oxidation. Catalyzes the formation of a hydroxyacyl-CoA by addition of water on enoyl-CoA. Also exhibits 3-hydroxyacyl-CoA epimerase and 3-hydroxyacyl-CoA dehydrogenase activities. This Escherichia coli (strain ATCC 8739 / DSM 1576 / NBRC 3972 / NCIMB 8545 / WDCM 00012 / Crooks) protein is Fatty acid oxidation complex subunit alpha.